Reading from the N-terminus, the 199-residue chain is N-(5'-phosphoribosyl)anthranilate isomerase (199 aa).

Belongs to the TrpF family.

The catalysed reaction is N-(5-phospho-beta-D-ribosyl)anthranilate = 1-(2-carboxyphenylamino)-1-deoxy-D-ribulose 5-phosphate. Its pathway is amino-acid biosynthesis; L-tryptophan biosynthesis; L-tryptophan from chorismate: step 3/5. The chain is N-(5'-phosphoribosyl)anthranilate isomerase from Campylobacter jejuni subsp. jejuni serotype O:2 (strain ATCC 700819 / NCTC 11168).